Reading from the N-terminus, the 491-residue chain is Probable malate:quinone oxidoreductase (491 aa).

The protein belongs to the MQO family. FAD serves as cofactor.

The enzyme catalyses (S)-malate + a quinone = a quinol + oxaloacetate. It participates in carbohydrate metabolism; tricarboxylic acid cycle; oxaloacetate from (S)-malate (quinone route): step 1/1. This Actinobacillus pleuropneumoniae serotype 5b (strain L20) protein is Probable malate:quinone oxidoreductase.